The following is a 109-amino-acid chain: uncharacterized protein (109 aa).

This is an uncharacterized protein from Autographa californica nuclear polyhedrosis virus (AcMNPV).